A 427-amino-acid polypeptide reads, in one-letter code: Pseudouridylate synthase 1 homolog (427 aa).

The segment at 20 to 83 (GPRPSCSPRM…DEERREKPPK (64 aa)) is disordered. Positions 44 to 79 (QDRRSCSGRAGGDRVWEDGEHPAKKLKSGGDEERRE) are enriched in basic and acidic residues. Asp-146 (nucleophile) is an active-site residue. Residues 407-427 (GGTGAKVPSPLEGSEGDGDTD) are disordered. A phosphoserine mark is found at Ser-415 and Ser-420. Position 426 is a phosphothreonine (Thr-426).

This sequence belongs to the tRNA pseudouridine synthase TruA family. As to quaternary structure, monomer. Forms a complex with RARG and the SRA1 RNA in the nucleus. Widely expressed. High levels of expression found in brain and skeletal muscle.

The protein localises to the mitochondrion. It is found in the nucleus. The protein resides in the cytoplasm. It carries out the reaction a uridine in tRNA = a pseudouridine in tRNA. It catalyses the reaction uridine(38/39/40) in tRNA = pseudouridine(38/39/40) in tRNA. The enzyme catalyses a uridine in mRNA = a pseudouridine in mRNA. Pseudouridylate synthase that catalyzes pseudouridylation of tRNAs and mRNAs. Acts on positions 27/28 in the anticodon stem and also positions 34 and 36 in the anticodon of an intron containing tRNA. Also catalyzes pseudouridylation of mRNAs: mediates pseudouridylation of mRNAs with the consensus sequence 5'-UGUAG-3'. Acts as a regulator of pre-mRNA splicing by mediating pseudouridylation of pre-mRNAs at locations associated with alternatively spliced regions. Pseudouridylation of pre-mRNAs near splice sites directly regulates mRNA splicing and mRNA 3'-end processing. Involved in regulation of nuclear receptor activity through pseudouridylation of SRA1 mRNA. This Homo sapiens (Human) protein is Pseudouridylate synthase 1 homolog.